The chain runs to 365 residues: UDP-galactose transporter homolog 1 (365 aa).

2 helical membrane passes run 42-62 (IIDL…WAVL) and 80-100 (ASLV…YAYL). N-linked (GlcNAc...) asparagine glycosylation occurs at Asn-115. Transmembrane regions (helical) follow at residues 182 to 202 (YAVV…HAAP) and 206 to 226 (SGAG…SMLL). N-linked (GlcNAc...) asparagine glycosylation occurs at Asn-231. A run of 4 helical transmembrane segments spans residues 249-269 (VMCG…LTFS), 289-309 (DIVL…QTLE), 315-335 (VLVT…VVWF), and 339-359 (LTLG…FEAW).

It belongs to the nucleotide-sugar transporter family. SLC35B subfamily.

It localises to the endoplasmic reticulum membrane. Its function is as follows. May be involved in specific transport of UDP-Gal from the cytosol to the Golgi lumen. Involved in the maintenance of optimal conditions for the folding of secretory pathway proteins in the endoplasmic reticulum. The chain is UDP-galactose transporter homolog 1 (HUT1) from Yarrowia lipolytica (strain CLIB 122 / E 150) (Yeast).